Here is a 188-residue protein sequence, read N- to C-terminus: Protein SSX3 (188 aa).

Residues 20-83 (KIQKAFDDIA…KRVTDFQGND (64 aa)) form the KRAB-related domain. The interval 113 to 162 (PKKPAEEGNVSKEVPEASGPQNDGKQLCPPGKPTTSEKINMISGPKRGEH) is disordered. Positions 115–127 (KPAEEGNVSKEVP) are enriched in basic and acidic residues. A Phosphoserine modification is found at S123.

It belongs to the SSX family. In terms of assembly, interacts with SSX2IP.

Could act as a modulator of transcription. In Homo sapiens (Human), this protein is Protein SSX3 (SSX3).